Here is a 359-residue protein sequence, read N- to C-terminus: Src kinase-associated phosphoprotein 1 (359 aa).

The PH domain maps to 107–210 (NVIKQGYLEK…WVDQISFLLK (104 aa)). Residues Tyr142, Tyr219, and Tyr232 each carry the phosphotyrosine modification. Residues 219 to 237 (YEEDEEEEEKEETYDDIDG) are compositionally biased toward acidic residues. The disordered stretch occupies residues 219 to 239 (YEEDEEEEEKEETYDDIDGFD). 2 positions are modified to phosphotyrosine; by FYN: Tyr271 and Tyr295. The interval 290-295 (RKGVDY) is interaction with FYB1. One can recognise an SH3 domain in the interval 294–355 (DYASYYQGLW…PKEYLTTAFE (62 aa)).

This sequence belongs to the SKAP family. Homodimer. Interacts with FYN. Interacts with PTPRC. Interacts with GRB2 when phosphorylated on Tyr-271. Interacts with FYB1, which is required for SKAP2 protein stability. Part of a complex consisting of SKAP1, FYB1 and CLNK. Interacts with RASGRP1. Interacts with FYB2. Phosphorylated on tyrosines. Phosphorylation by FYN on Tyr-271 is required for GRB2 interaction. Phosphorylation by FYN on Tyr-295 abolishes interaction with FYB1. Tyr-232 is dephosphorylated by PTPRC. As to expression, highly expressed in thymocytes and peripheral blood lymphocytes. Also expressed in spleen cells and testis. Present in T-cells (at protein level).

The protein localises to the cytoplasm. It is found in the nucleus. It localises to the cell membrane. In terms of biological role, positively regulates T-cell receptor signaling by enhancing the MAP kinase pathway. Required for optimal conjugation between T-cells and antigen-presenting cells by promoting the clustering of integrin ITGAL on the surface of T-cells. May be involved in high affinity immunoglobulin epsilon receptor signaling in mast cells. This Homo sapiens (Human) protein is Src kinase-associated phosphoprotein 1 (SKAP1).